Consider the following 403-residue polypeptide: NADH-quinone oxidoreductase subunit D (403 aa).

This sequence belongs to the complex I 49 kDa subunit family. In terms of assembly, NDH-1 is composed of 14 different subunits. Subunits NuoB, C, D, E, F, and G constitute the peripheral sector of the complex.

It localises to the cell membrane. The catalysed reaction is a quinone + NADH + 5 H(+)(in) = a quinol + NAD(+) + 4 H(+)(out). In terms of biological role, NDH-1 shuttles electrons from NADH, via FMN and iron-sulfur (Fe-S) centers, to quinones in the respiratory chain. The immediate electron acceptor for the enzyme in this species is believed to be a menaquinone. Couples the redox reaction to proton translocation (for every two electrons transferred, four hydrogen ions are translocated across the cytoplasmic membrane), and thus conserves the redox energy in a proton gradient. The sequence is that of NADH-quinone oxidoreductase subunit D from Amoebophilus asiaticus (strain 5a2).